The sequence spans 147 residues: Hemoglobin subunit gamma-2 (147 aa).

The Globin domain occupies 3–147; it reads HFTEEDKATI…VASALSSRYH (145 aa). Position 13 is a phosphothreonine (T13). Phosphoserine is present on residues S45, S51, and S53. K60 bears the N6-acetyllysine mark. A heme b-binding site is contributed by H64. K83 is modified (N6-acetyllysine). H93 contributes to the heme b binding site. C94 carries the post-translational modification S-nitrosocysteine. S140, S143, and S144 each carry phosphoserine.

It belongs to the globin family. Heterotetramer of two alpha chains and two gamma chains in fetal hemoglobin (Hb F). Red blood cells.

Gamma chains make up the fetal hemoglobin F, in combination with alpha chains. The polypeptide is Hemoglobin subunit gamma-2 (HBG2) (Pongo pygmaeus (Bornean orangutan)).